Reading from the N-terminus, the 408-residue chain is FAD-dependent monooxygenase nscC (408 aa).

Residues Met1 to Ala20 form the signal peptide. Glu34 and Ala45 together coordinate FAD. Residues Asn91 and Asn103 are each glycosylated (N-linked (GlcNAc...) asparagine). Arg119 serves as a coordination point for FAD. N-linked (GlcNAc...) asparagine glycans are attached at residues Asn170 and Asn231. Residues Asp328 and Gly341 each contribute to the FAD site.

It belongs to the paxM FAD-dependent monooxygenase family. FAD is required as a cofactor.

Its pathway is secondary metabolite biosynthesis. FAD-dependent monooxygenase; part of the gene cluster that mediates the biosynthesis of neosartoricin, a prenylated anthracenone that exhibits T-cell antiproliferative activity, suggestive of a physiological role as an immunosuppressive agent. The non-reducing polyketide synthase nscA probably synthesizes and cyclizes the decaketide backbone. The hydrolase nscB then mediates the product release through hydrolysis followed by spontaneous decarboxylation. The prenyltransferase nscD catalyzes the addition of the dimethylallyl group to the aromatic C5. The FAD-dependent monooxygenase nscC is then responsible for the stereospecific hydroxylation at C2. There is no gene encoding O-acetyltransferase in the nsc gene cluster; thus, the last step of 2-O-acetylation leading to neosartoricin may be catalyzed by an unidentified O-acetyltransferase. The protein is FAD-dependent monooxygenase nscC of Aspergillus fumigatus (strain ATCC MYA-4609 / CBS 101355 / FGSC A1100 / Af293) (Neosartorya fumigata).